The following is an 858-amino-acid chain: DNA mismatch repair protein MutS (858 aa).

Residue G613–S620 participates in ATP binding.

Belongs to the DNA mismatch repair MutS family.

This protein is involved in the repair of mismatches in DNA. It is possible that it carries out the mismatch recognition step. This protein has a weak ATPase activity. The chain is DNA mismatch repair protein MutS from Dehalococcoides mccartyi (strain ATCC BAA-2100 / JCM 16839 / KCTC 5957 / BAV1).